A 753-amino-acid chain; its full sequence is Polyribonucleotide nucleotidyltransferase (753 aa).

2 residues coordinate Mg(2+): aspartate 543 and aspartate 549. In terms of domain architecture, KH spans 609–668 (PRITTVKIPVAKIGELIGPKGKNINALTEETGANISIEDDGTVFISAADGASAEAAIEKI). One can recognise an S1 motif domain in the interval 680 to 749 (GERFLGTVVK…NRGKISLVPV (70 aa)).

It belongs to the polyribonucleotide nucleotidyltransferase family. It depends on Mg(2+) as a cofactor.

It localises to the cytoplasm. It catalyses the reaction RNA(n+1) + phosphate = RNA(n) + a ribonucleoside 5'-diphosphate. Involved in mRNA degradation. Catalyzes the phosphorolysis of single-stranded polyribonucleotides processively in the 3'- to 5'-direction. The protein is Polyribonucleotide nucleotidyltransferase of Corynebacterium glutamicum (strain R).